The chain runs to 256 residues: Ribonuclease 3 (256 aa).

Residues 3–125 (LDALQQRLGY…IVGAVFLDAG (123 aa)) form the RNase III domain. Glu38 is a Mg(2+) binding site. Residue Asp42 is part of the active site. Positions 111 and 114 each coordinate Mg(2+). Residue Glu114 is part of the active site. Residues 152–222 (DAKTLLQEYL…AKLALDEVQK (71 aa)) form the DRBM domain. A disordered region spans residues 229–256 (KRSRAERTGKTRKQPQPQDPQLSLRLKE).

This sequence belongs to the ribonuclease III family. As to quaternary structure, homodimer. Mg(2+) is required as a cofactor.

It is found in the cytoplasm. It carries out the reaction Endonucleolytic cleavage to 5'-phosphomonoester.. Digests double-stranded RNA. Involved in the processing of primary rRNA transcript to yield the immediate precursors to the large and small rRNAs (23S and 16S). Processes some mRNAs, and tRNAs when they are encoded in the rRNA operon. Processes pre-crRNA and tracrRNA of type II CRISPR loci if present in the organism. This chain is Ribonuclease 3, found in Cupriavidus taiwanensis (strain DSM 17343 / BCRC 17206 / CCUG 44338 / CIP 107171 / LMG 19424 / R1) (Ralstonia taiwanensis (strain LMG 19424)).